A 299-amino-acid polypeptide reads, in one-letter code: Mimecan (299 aa).

A signal peptide spans 1 to 19; that stretch reads MKTLQSTLLLFLFVPLIKP. The N-linked (GlcNAc...) (keratan sulfate) asparagine glycan is linked to N89. 7 LRR repeats span residues 113–132, 133–156, 157–180, 181–200, 201–226, 227–247, and 248–278; these read DAVP…FNKI, KKLT…GNLI, EDIE…ENQL, LKLP…YNKI, KSRG…HNAL, ESVP…FNNI, and TSIT…GNPV. Residue N215 is glycosylated (N-linked (GlcNAc...) (keratan sulfate) asparagine). The N-linked (GlcNAc...) asparagine glycan is linked to N246. A disulfide bridge links C256 with C289. N-linked (GlcNAc...) (keratan sulfate) asparagine glycosylation is present at N259.

The protein belongs to the small leucine-rich proteoglycan (SLRP) family. SLRP class III subfamily. Post-translationally, contains keratan sulfate. Keratan sulfate attachment is observed in the cornea but the protein also exists in other tissues without keratan sulfate. The 12 kDa OIF in bone and the 25 kDa KSPG25 protein in cornea are probably proteolytic fragments. Bone and cornea.

The protein resides in the secreted. It localises to the extracellular space. It is found in the extracellular matrix. Functionally, induces bone formation in conjunction with TGF-beta-1 or TGF-beta-2. This Bos taurus (Bovine) protein is Mimecan (OGN).